The sequence spans 684 residues: Macrolide export ATP-binding/permease protein MacB (684 aa).

The ABC transporter domain maps to 2-243 (IQLYGLRKDY…RSRLANSRAE (242 aa)). 38-45 (GSSGSGKT) is an ATP binding site. The next 5 helical transmembrane spans lie at 248 to 268 (PASA…VLAL), 275 to 295 (TVLT…TMEL), 563 to 583 (LVIA…IMLV), 615 to 635 (VLCV…SVLV), and 644 to 664 (AMSI…GIVF).

The protein belongs to the ABC transporter superfamily. Macrolide exporter (TC 3.A.1.122) family. As to quaternary structure, homodimer.

The protein resides in the cell inner membrane. Non-canonical ABC transporter that contains transmembrane domains (TMD), which form a pore in the inner membrane, and an ATP-binding domain (NBD), which is responsible for energy generation. Confers resistance against macrolides. The protein is Macrolide export ATP-binding/permease protein MacB of Rhodopirellula baltica (strain DSM 10527 / NCIMB 13988 / SH1).